Here is a 324-residue protein sequence, read N- to C-terminus: Beta-ketoacyl-[acyl-carrier-protein] synthase III (324 aa).

Catalysis depends on residues C112 and H249. Residues 250-254 (QANRR) are ACP-binding. N279 is an active-site residue.

It belongs to the thiolase-like superfamily. FabH family. Homodimer.

The protein localises to the cytoplasm. It catalyses the reaction malonyl-[ACP] + acetyl-CoA + H(+) = 3-oxobutanoyl-[ACP] + CO2 + CoA. It functions in the pathway lipid metabolism; fatty acid biosynthesis. In terms of biological role, catalyzes the condensation reaction of fatty acid synthesis by the addition to an acyl acceptor of two carbons from malonyl-ACP. Catalyzes the first condensation reaction which initiates fatty acid synthesis and may therefore play a role in governing the total rate of fatty acid production. Possesses both acetoacetyl-ACP synthase and acetyl transacylase activities. Its substrate specificity determines the biosynthesis of branched-chain and/or straight-chain of fatty acids. In Streptococcus equi subsp. zooepidemicus (strain H70), this protein is Beta-ketoacyl-[acyl-carrier-protein] synthase III.